The sequence spans 409 residues: 23S rRNA (uracil(747)-C(5))-methyltransferase (409 aa).

Residues C61, C67, C70, and C137 each coordinate [4Fe-4S] cluster. Residues Q251, Y277, E298, and D339 each coordinate S-adenosyl-L-methionine. C365 (nucleophile) is an active-site residue.

The protein belongs to the class I-like SAM-binding methyltransferase superfamily. RNA M5U methyltransferase family.

The enzyme catalyses uridine(747) in 23S rRNA + S-adenosyl-L-methionine = 5-methyluridine(747) in 23S rRNA + S-adenosyl-L-homocysteine + H(+). Functionally, catalyzes the formation of 5-methyl-uridine at position equivalent to 747 (m5U747) in 23S rRNA. This Pyrococcus furiosus (strain ATCC 43587 / DSM 3638 / JCM 8422 / Vc1) protein is 23S rRNA (uracil(747)-C(5))-methyltransferase.